The chain runs to 51 residues: ATP synthase F(1) complex subunit epsilon, mitochondrial (51 aa).

N6-acetyllysine; alternate is present on residues Lys21, Lys32, and Lys37. N6-succinyllysine; alternate occurs at positions 21, 32, and 37. Position 44 is an N6-acetyllysine (Lys44).

Belongs to the eukaryotic ATPase epsilon family. Component of the ATP synthase complex composed at least of ATP5F1A/subunit alpha, ATP5F1B/subunit beta, ATP5MC1/subunit c (homooctomer), MT-ATP6/subunit a, MT-ATP8/subunit 8, ATP5ME/subunit e, ATP5MF/subunit f, ATP5MG/subunit g, ATP5MK/subunit k, ATP5MJ/subunit j, ATP5F1C/subunit gamma, ATP5F1D/subunit delta, ATP5F1E/subunit epsilon, ATP5PF/subunit F6, ATP5PB/subunit b, ATP5PD/subunit d, ATP5PO/subunit OSCP. ATP synthase complex consists of a soluble F(1) head domain (subunits alpha(3) and beta(3)) - the catalytic core - and a membrane F(0) domain - the membrane proton channel (subunits c, a, 8, e, f, g, k and j). These two domains are linked by a central stalk (subunits gamma, delta, and epsilon) rotating inside the F1 region and a stationary peripheral stalk (subunits F6, b, d, and OSCP).

It localises to the mitochondrion. The protein localises to the mitochondrion inner membrane. Subunit epsilon, of the mitochondrial membrane ATP synthase complex (F(1)F(0) ATP synthase or Complex V) that produces ATP from ADP in the presence of a proton gradient across the membrane which is generated by electron transport complexes of the respiratory chain. ATP synthase complex consist of a soluble F(1) head domain - the catalytic core - and a membrane F(1) domain - the membrane proton channel. These two domains are linked by a central stalk rotating inside the F(1) region and a stationary peripheral stalk. During catalysis, ATP synthesis in the catalytic domain of F(1) is coupled via a rotary mechanism of the central stalk subunits to proton translocation. In vivo, can only synthesize ATP although its ATP hydrolase activity can be activated artificially in vitro. May be essential for the assembly of F(1) and may play an important role in the incorporation of the hydrophobic subunit c into the F(1)-c oligomer rotor of the mitochondrial ATP synthase complex. In Rattus norvegicus (Rat), this protein is ATP synthase F(1) complex subunit epsilon, mitochondrial.